The primary structure comprises 418 residues: Serine/threonine transporter SstT (418 aa).

A run of 8 helical transmembrane segments spans residues 21–41, 49–69, 83–103, 142–162, 190–210, 217–237, 299–319, and 331–351; these read ILIG…AAIA, FVGA…IASI, ILFL…VVSF, ALLN…GIAL, FAPL…GFGA, LLVV…PLIV, MAGA…TLGI, and VVAA…LLLI.

Belongs to the dicarboxylate/amino acid:cation symporter (DAACS) (TC 2.A.23) family.

The protein localises to the cell inner membrane. It catalyses the reaction L-serine(in) + Na(+)(in) = L-serine(out) + Na(+)(out). It carries out the reaction L-threonine(in) + Na(+)(in) = L-threonine(out) + Na(+)(out). Functionally, involved in the import of serine and threonine into the cell, with the concomitant import of sodium (symport system). The sequence is that of Serine/threonine transporter SstT from Yersinia pseudotuberculosis serotype O:1b (strain IP 31758).